We begin with the raw amino-acid sequence, 289 residues long: MAPKSAAQALFEKADKKANSSGGWFSSANSKWEEAGDLYQQAANAFKLEKQFKEAGDAFAREAECREKCKESLDAGNAWWNAAKAYKRGYPDLAIQALQQTIQHLVAGGRFRQAADREKEIAQIYLQETHDLSRACESFLRAGDWYAEEDATATANQCYKDAADLYAELEQFPQAITLYERVADHSLTSNLTKYSVKEYWLKSLLCTVALGDIVTARRNAQKYIGQDNTFVGTREFKFADALMEAVDAGDVGAYTAAVVEFDRITKLDNWKTAILLKIKRGIQEEPGLT.

It belongs to the SNAP family.

It is found in the membrane. In terms of biological role, required for vesicular transport between the endoplasmic reticulum and the Golgi apparatus. The polypeptide is Vesicular-fusion protein SEC17 (SEC17) (Coprinopsis cinerea (strain Okayama-7 / 130 / ATCC MYA-4618 / FGSC 9003) (Inky cap fungus)).